A 418-amino-acid polypeptide reads, in one-letter code: Glutamyl-tRNA(Gln) amidotransferase subunit D (418 aa).

An Asparaginase/glutaminase domain is found at 74–405; the sequence is KNISILSTGG…EESKELMSKN (332 aa). Residues Thr84, Thr160, Asp161, and Lys237 contribute to the active site.

The protein belongs to the asparaginase 1 family. GatD subfamily. Heterodimer of GatD and GatE.

It catalyses the reaction L-glutamyl-tRNA(Gln) + L-glutamine + ATP + H2O = L-glutaminyl-tRNA(Gln) + L-glutamate + ADP + phosphate + H(+). Allows the formation of correctly charged Gln-tRNA(Gln) through the transamidation of misacylated Glu-tRNA(Gln) in organisms which lack glutaminyl-tRNA synthetase. The reaction takes place in the presence of glutamine and ATP through an activated gamma-phospho-Glu-tRNA(Gln). The GatDE system is specific for glutamate and does not act on aspartate. The chain is Glutamyl-tRNA(Gln) amidotransferase subunit D from Methanococcus maripaludis (strain C5 / ATCC BAA-1333).